We begin with the raw amino-acid sequence, 124 residues long: Small ribosomal subunit protein uS12 (124 aa).

The residue at position 89 (Asp-89) is a 3-methylthioaspartic acid.

It belongs to the universal ribosomal protein uS12 family. In terms of assembly, part of the 30S ribosomal subunit. Contacts proteins S8 and S17. May interact with IF1 in the 30S initiation complex.

With S4 and S5 plays an important role in translational accuracy. Functionally, interacts with and stabilizes bases of the 16S rRNA that are involved in tRNA selection in the A site and with the mRNA backbone. Located at the interface of the 30S and 50S subunits, it traverses the body of the 30S subunit contacting proteins on the other side and probably holding the rRNA structure together. The combined cluster of proteins S8, S12 and S17 appears to hold together the shoulder and platform of the 30S subunit. This is Small ribosomal subunit protein uS12 from Buchnera aphidicola subsp. Acyrthosiphon pisum (strain 5A).